Reading from the N-terminus, the 209-residue chain is Guanylate kinase (209 aa).

Positions 7–185 constitute a Guanylate kinase-like domain; it reads GNLYIVAAPS…AAMELQSIVI (179 aa). 14-21 serves as a coordination point for ATP; the sequence is APSGGGKT.

Belongs to the guanylate kinase family.

It is found in the cytoplasm. It carries out the reaction GMP + ATP = GDP + ADP. Its function is as follows. Essential for recycling GMP and indirectly, cGMP. This chain is Guanylate kinase, found in Legionella pneumophila (strain Lens).